The chain runs to 524 residues: Thermosome subunit 3 (524 aa).

It belongs to the TCP-1 chaperonin family. As to quaternary structure, the thermosome or CCT complex is a oligomeric complex of two octameric double-ring structures; the complex is probably a heterooligomer of CCT1, CCT2 and CCT3 with yet unknown stoichiometry.

Functionally, molecular chaperone that assists in the folding or refolding of nascent or denatured proteins along with ATP hydrolysis. ATPase activity is highest in thermosome assemblies containing CCT1:CCT2, followed by assemblies containing CCT1:CCT2:CCT3. Not required for thermosome ATPase activity. Not required for growth. The sequence is that of Thermosome subunit 3 (cct3) from Haloferax volcanii (strain ATCC 29605 / DSM 3757 / JCM 8879 / NBRC 14742 / NCIMB 2012 / VKM B-1768 / DS2) (Halobacterium volcanii).